Here is a 451-residue protein sequence, read N- to C-terminus: Tubulin alpha-1 chain (451 aa).

Glutamine 11 is a GTP binding site. An N6-acetyllysine modification is found at lysine 40. Glutamate 71, glycine 144, threonine 145, threonine 179, asparagine 206, and asparagine 228 together coordinate GTP. Glutamate 71 lines the Mg(2+) pocket. The active site involves glutamate 254. The interval 432 to 451 is disordered; the sequence is YEEVGADSAEGDEEDEGDEY.

The protein belongs to the tubulin family. As to quaternary structure, dimer of alpha and beta chains. A typical microtubule is a hollow water-filled tube with an outer diameter of 25 nm and an inner diameter of 15 nM. Alpha-beta heterodimers associate head-to-tail to form protofilaments running lengthwise along the microtubule wall with the beta-tubulin subunit facing the microtubule plus end conferring a structural polarity. Microtubules usually have 13 protofilaments but different protofilament numbers can be found in some organisms and specialized cells. Mg(2+) is required as a cofactor. In terms of processing, undergoes a tyrosination/detyrosination cycle, the cyclic removal and re-addition of a C-terminal tyrosine residue by the enzymes tubulin tyrosine carboxypeptidase (TTCP) and tubulin tyrosine ligase (TTL), respectively. Acetylation of alpha chains at Lys-40 stabilizes microtubules and affects affinity and processivity of microtubule motors. This modification has a role in multiple cellular functions, ranging from cell motility, cell cycle progression or cell differentiation to intracellular trafficking and signaling.

The protein resides in the cytoplasm. It localises to the cytoskeleton. The enzyme catalyses GTP + H2O = GDP + phosphate + H(+). Tubulin is the major constituent of microtubules, a cylinder consisting of laterally associated linear protofilaments composed of alpha- and beta-tubulin heterodimers. Microtubules grow by the addition of GTP-tubulin dimers to the microtubule end, where a stabilizing cap forms. Below the cap, tubulin dimers are in GDP-bound state, owing to GTPase activity of alpha-tubulin. The protein is Tubulin alpha-1 chain of Gossypium hirsutum (Upland cotton).